We begin with the raw amino-acid sequence, 54 residues long: Large ribosomal subunit protein bL33 (54 aa).

Belongs to the bacterial ribosomal protein bL33 family.

The chain is Large ribosomal subunit protein bL33 from Roseiflexus castenholzii (strain DSM 13941 / HLO8).